Consider the following 421-residue polypeptide: Testin (421 aa).

Residues 92–199 (MILTNPVAAK…GDVKLPYEMG (108 aa)) enclose the PET domain. The segment at 133–164 (EKQPVAGSEGAQYRKKQLAKQLPAHDQDPSKC) is disordered. Over residues 155 to 164 (PAHDQDPSKC) the composition is skewed to basic and acidic residues. LIM zinc-binding domains follow at residues 234-297 (YFCY…CDSE), 299-359 (PRCA…NHAV), and 362-421 (QGCH…KMMS).

This sequence belongs to the prickle / espinas / testin family. As to quaternary structure, interacts via LIM domain 1 with ZYX. Interacts (via LIM domain 3) with ENAH and VASP. Interacts with ALKBH4, talin, actin, alpha-actinin, GRIP1 and PXN. Interacts (via LIM domain 2) with ACTL7A (via N-terminus). Heterodimer with ACTL7A; the heterodimer interacts with ENAH to form a heterotrimer.

The protein localises to the cytoplasm. It localises to the cell junction. It is found in the focal adhesion. In terms of biological role, scaffold protein that may play a role in cell adhesion, cell spreading and in the reorganization of the actin cytoskeleton. Plays a role in the regulation of cell proliferation. May act as a tumor suppressor. The chain is Testin (TES) from Oryctolagus cuniculus (Rabbit).